A 462-amino-acid chain; its full sequence is ATP synthase subunit beta (462 aa).

151 to 158 is an ATP binding site; the sequence is GGAGVGKT.

The protein belongs to the ATPase alpha/beta chains family. F-type ATPases have 2 components, CF(1) - the catalytic core - and CF(0) - the membrane proton channel. CF(1) has five subunits: alpha(3), beta(3), gamma(1), delta(1), epsilon(1). CF(0) has four main subunits: a(1), b(1), b'(1) and c(9-12).

It localises to the cell inner membrane. The catalysed reaction is ATP + H2O + 4 H(+)(in) = ADP + phosphate + 5 H(+)(out). Its function is as follows. Produces ATP from ADP in the presence of a proton gradient across the membrane. The catalytic sites are hosted primarily by the beta subunits. This Chlorobium phaeobacteroides (strain DSM 266 / SMG 266 / 2430) protein is ATP synthase subunit beta.